Reading from the N-terminus, the 173-residue chain is NADH-ubiquinone oxidoreductase chain 6 (173 aa).

The next 6 membrane-spanning stretches (helical) occupy residues Met-1 to Ser-21, Phe-27 to Gly-47, Leu-53 to Leu-73, Trp-82 to Gly-102, Tyr-106 to Leu-126, and Gly-141 to Ile-161.

It belongs to the complex I subunit 6 family.

The protein localises to the mitochondrion membrane. It catalyses the reaction a ubiquinone + NADH + 5 H(+)(in) = a ubiquinol + NAD(+) + 4 H(+)(out). Its function is as follows. Core subunit of the mitochondrial membrane respiratory chain NADH dehydrogenase (Complex I) that is believed to belong to the minimal assembly required for catalysis. Complex I functions in the transfer of electrons from NADH to the respiratory chain. The immediate electron acceptor for the enzyme is believed to be ubiquinone. The protein is NADH-ubiquinone oxidoreductase chain 6 (MT-ND6) of Latimeria chalumnae (Coelacanth).